The following is a 281-amino-acid chain: ATP phosphoribosyltransferase (281 aa).

It belongs to the ATP phosphoribosyltransferase family. Long subfamily. The cofactor is Mg(2+).

It is found in the cytoplasm. The catalysed reaction is 1-(5-phospho-beta-D-ribosyl)-ATP + diphosphate = 5-phospho-alpha-D-ribose 1-diphosphate + ATP. Its pathway is amino-acid biosynthesis; L-histidine biosynthesis; L-histidine from 5-phospho-alpha-D-ribose 1-diphosphate: step 1/9. With respect to regulation, feedback inhibited by histidine. In terms of biological role, catalyzes the condensation of ATP and 5-phosphoribose 1-diphosphate to form N'-(5'-phosphoribosyl)-ATP (PR-ATP). Has a crucial role in the pathway because the rate of histidine biosynthesis seems to be controlled primarily by regulation of HisG enzymatic activity. The chain is ATP phosphoribosyltransferase from Corynebacterium aurimucosum (strain ATCC 700975 / DSM 44827 / CIP 107346 / CN-1) (Corynebacterium nigricans).